The chain runs to 556 residues: Formate--tetrahydrofolate ligase (556 aa).

65–72 (TPAGEGKS) is an ATP binding site.

The protein belongs to the formate--tetrahydrofolate ligase family.

It carries out the reaction (6S)-5,6,7,8-tetrahydrofolate + formate + ATP = (6R)-10-formyltetrahydrofolate + ADP + phosphate. It functions in the pathway one-carbon metabolism; tetrahydrofolate interconversion. This chain is Formate--tetrahydrofolate ligase, found in Streptococcus pneumoniae serotype 4 (strain ATCC BAA-334 / TIGR4).